A 294-amino-acid chain; its full sequence is Small ribosomal subunit protein uS2 (294 aa).

The interval 254–294 (ESSNTEAPVAETAAAEAPVADAAIEAPVAEEAKTTEADDTK) is disordered. Positions 259–282 (EAPVAETAAAEAPVADAAIEAPVA) are enriched in low complexity. The span at 283–294 (EEAKTTEADDTK) shows a compositional bias: basic and acidic residues.

Belongs to the universal ribosomal protein uS2 family.

This is Small ribosomal subunit protein uS2 from Renibacterium salmoninarum (strain ATCC 33209 / DSM 20767 / JCM 11484 / NBRC 15589 / NCIMB 2235).